A 388-amino-acid chain; its full sequence is Succinate--CoA ligase [ADP-forming] subunit beta (388 aa).

One can recognise an ATP-grasp domain in the interval lysine 9 to histidine 244. ATP-binding positions include lysine 46, glycine 53 to glycine 55, glutamate 99, threonine 102, and glutamate 107. Positions 199 and 213 each coordinate Mg(2+). Substrate contacts are provided by residues asparagine 264 and glycine 321–valine 323.

This sequence belongs to the succinate/malate CoA ligase beta subunit family. Heterotetramer of two alpha and two beta subunits. Requires Mg(2+) as cofactor.

The enzyme catalyses succinate + ATP + CoA = succinyl-CoA + ADP + phosphate. It carries out the reaction GTP + succinate + CoA = succinyl-CoA + GDP + phosphate. It participates in carbohydrate metabolism; tricarboxylic acid cycle; succinate from succinyl-CoA (ligase route): step 1/1. In terms of biological role, succinyl-CoA synthetase functions in the citric acid cycle (TCA), coupling the hydrolysis of succinyl-CoA to the synthesis of either ATP or GTP and thus represents the only step of substrate-level phosphorylation in the TCA. The beta subunit provides nucleotide specificity of the enzyme and binds the substrate succinate, while the binding sites for coenzyme A and phosphate are found in the alpha subunit. In Shewanella loihica (strain ATCC BAA-1088 / PV-4), this protein is Succinate--CoA ligase [ADP-forming] subunit beta.